We begin with the raw amino-acid sequence, 536 residues long: Protein ST7 homolog (536 aa).

Helical transmembrane passes span 3–23 and 49–69; these read CSWTFLWLLWIAMVAVLLFFL and FYVALTGTSSLVSGIILIFEW. Positions 192 to 219 form a coiled coil; it reads AEEDTETVAQAENVLRRALRAIENTLST. The helical transmembrane segment at 464–484 threads the bilayer; sequence STLGMLIQTFACLAICILAVL.

It belongs to the ST7 family.

It is found in the membrane. The sequence is that of Protein ST7 homolog from Caenorhabditis briggsae.